A 710-amino-acid polypeptide reads, in one-letter code: Chaperonin-containing T-complex member BBS12 (710 aa).

It belongs to the TCP-1 chaperonin family. BBS12 subfamily. As to quaternary structure, component of the chaperonin-containing T-complex (TRiC), a heterooligomeric complex of about 850 to 900 kDa that forms two stacked rings, 12 to 16 nm in diameter. Interacts with MKKS.

It localises to the cell projection. The protein localises to the cilium. Its function is as follows. Component of the chaperonin-containing T-complex (TRiC), a molecular chaperone complex that assists the folding of proteins upon ATP hydrolysis. As part of the TRiC complex may play a role in the assembly of BBSome, a complex involved in ciliogenesis regulating transports vesicles to the cilia. Involved in adipogenic differentiation. In Pongo abelii (Sumatran orangutan), this protein is Chaperonin-containing T-complex member BBS12 (BBS12).